A 91-amino-acid polypeptide reads, in one-letter code: MGGKSGGKFAGKRRDSGNRGLFKRRKFCRFTAEKVVEVDYKDVDVLKEFIAENGRIIPARITGTKAHYQRQLGTAIKRARFLALMPYTDLH.

This sequence belongs to the bacterial ribosomal protein bS18 family. Part of the 30S ribosomal subunit. Forms a tight heterodimer with protein bS6.

Binds as a heterodimer with protein bS6 to the central domain of the 16S rRNA, where it helps stabilize the platform of the 30S subunit. The sequence is that of Small ribosomal subunit protein bS18 from Thiobacillus denitrificans (strain ATCC 25259 / T1).